A 339-amino-acid polypeptide reads, in one-letter code: Methionine import ATP-binding protein MetN 2 (339 aa).

Residues 2-241 (ISFNNVSKVY…PKTKTTQNFV (240 aa)) form the ABC transporter domain. ATP is bound at residue 38 to 45 (GFSGAGKS).

The protein belongs to the ABC transporter superfamily. Methionine importer (TC 3.A.1.24) family. In terms of assembly, the complex is composed of two ATP-binding proteins (MetN), two transmembrane proteins (MetI) and a solute-binding protein (MetQ).

It localises to the cell membrane. The catalysed reaction is L-methionine(out) + ATP + H2O = L-methionine(in) + ADP + phosphate + H(+). The enzyme catalyses D-methionine(out) + ATP + H2O = D-methionine(in) + ADP + phosphate + H(+). In terms of biological role, part of the ABC transporter complex MetNIQ involved in methionine import. Responsible for energy coupling to the transport system. The chain is Methionine import ATP-binding protein MetN 2 from Bacillus cereus (strain ZK / E33L).